Reading from the N-terminus, the 312-residue chain is Glyoxylate/hydroxypyruvate reductase A (312 aa).

The active site involves Arg-227. His-275 functions as the Proton donor in the catalytic mechanism.

The protein belongs to the D-isomer specific 2-hydroxyacid dehydrogenase family. GhrA subfamily.

It localises to the cytoplasm. It carries out the reaction glycolate + NADP(+) = glyoxylate + NADPH + H(+). It catalyses the reaction (R)-glycerate + NAD(+) = 3-hydroxypyruvate + NADH + H(+). The catalysed reaction is (R)-glycerate + NADP(+) = 3-hydroxypyruvate + NADPH + H(+). Its function is as follows. Catalyzes the NADPH-dependent reduction of glyoxylate and hydroxypyruvate into glycolate and glycerate, respectively. This chain is Glyoxylate/hydroxypyruvate reductase A, found in Escherichia coli (strain UTI89 / UPEC).